The chain runs to 317 residues: Olfactory receptor 10AD1 (317 aa).

Residues 1–25 (MLRNGSIVTEFILVGFQQSSTSTRA) lie on the Extracellular side of the membrane. N-linked (GlcNAc...) asparagine glycosylation occurs at asparagine 4. The helical transmembrane segment at 26 to 46 (LLFALFLALYSLTMAMNGLII) threads the bilayer. Residues 47 to 55 (FITSWTDPK) lie on the Cytoplasmic side of the membrane. The chain crosses the membrane as a helical span at residues 56–76 (LNSPMYFFLGHLSLLDVCFIT). Residues 77–100 (TTIPQMLIHLVVRDHIVSFVCCMT) lie on the Extracellular side of the membrane. Cysteine 98 and cysteine 190 form a disulfide bridge. The helical transmembrane segment at 101-121 (QMYFVFCVGVAECILLAFMAY) threads the bilayer. Topologically, residues 122–140 (DRYVAICYPLNYVPIISQK) are cytoplasmic. The chain crosses the membrane as a helical span at residues 141-161 (VCVRLVGTAWFFGLINGIFLE). At 162–198 (YISFREPFRRDNHIESFFCEAPIVIGLSCGDPQFSLW) the chain is on the extracellular side. A helical membrane pass occupies residues 199 to 218 (AIFADAIVVILSPMVLTVTS). Over 219 to 238 (YVHILATILSKASSSGRGKT) the chain is Cytoplasmic. A helical transmembrane segment spans residues 239–259 (FSTCASHLTVVIFLYTSAMFS). Residues 260-272 (YMNPHSTHGPDKD) are Extracellular-facing. The helical transmembrane segment at 273–293 (KPFSLLYTIITPMCNPIIYSF) threads the bilayer. Residues 294–317 (RNKEIKEAMVRALGRTRLAQPQSV) lie on the Cytoplasmic side of the membrane.

This sequence belongs to the G-protein coupled receptor 1 family.

It localises to the cell membrane. In terms of biological role, odorant receptor. This chain is Olfactory receptor 10AD1 (OR10AD1), found in Homo sapiens (Human).